Consider the following 173-residue polypeptide: MAEKRNIFLVGPMGAGKSTIGRQLAQQLNMEFFDSDQEIERRTGADVGWVFDVEGEEGFRDREEKIINELTEKQGIVLATGGGSVKSRETRNRLSARGVVVYLETTIEKQLARTQRDKKRPLLQVESPPREVLEALADERNPLYDEIADVTIRTDDQSAKVVANQIINMLEKS.

14-19 is a binding site for ATP; the sequence is GAGKST. Position 18 (Ser18) interacts with Mg(2+). Residues Asp36, Arg60, and Gly82 each coordinate substrate. Arg120 is an ATP binding site. Residue Arg140 coordinates substrate. ATP is bound at residue Gln157.

The protein belongs to the shikimate kinase family. As to quaternary structure, monomer. Requires Mg(2+) as cofactor.

It localises to the cytoplasm. It catalyses the reaction shikimate + ATP = 3-phosphoshikimate + ADP + H(+). Its pathway is metabolic intermediate biosynthesis; chorismate biosynthesis; chorismate from D-erythrose 4-phosphate and phosphoenolpyruvate: step 5/7. In terms of biological role, catalyzes the specific phosphorylation of the 3-hydroxyl group of shikimic acid using ATP as a cosubstrate. This Erwinia tasmaniensis (strain DSM 17950 / CFBP 7177 / CIP 109463 / NCPPB 4357 / Et1/99) protein is Shikimate kinase 1.